We begin with the raw amino-acid sequence, 310 residues long: Alpha/beta hydrolase domain-containing protein 17A (310 aa).

A disordered region spans residues 38-61; the sequence is VPEPEPGPGGAGAAPSGPLRTSAA. Catalysis depends on charge relay system residues Ser190, Asp255, and His284. Residue Ser307 is modified to Phosphoserine.

The protein belongs to the AB hydrolase superfamily. ABHD17 family. Palmitoylated on cysteine residues located in a cysteine cluster at the N-terminus which promotes membrane localization. Palmitoylation is required for post-synaptic localization and for depalmitoylating activity towards DLG4/PSD95.

Its subcellular location is the cell membrane. It is found in the endosome membrane. The protein localises to the cell projection. The protein resides in the dendritic spine. It localises to the postsynaptic density membrane. The catalysed reaction is S-hexadecanoyl-L-cysteinyl-[protein] + H2O = L-cysteinyl-[protein] + hexadecanoate + H(+). Functionally, hydrolyzes fatty acids from S-acylated cysteine residues in proteins. Has depalmitoylating activity towards NRAS. Has depalmitoylating activity towards DLG4/PSD95. May have depalmitoylating activity towars MAP6. The chain is Alpha/beta hydrolase domain-containing protein 17A from Mus musculus (Mouse).